Here is a 139-residue protein sequence, read N- to C-terminus: uncharacterized protein (139 aa).

It to S.typhimurium FliF.

In terms of biological role, may be involved in the assembly, structure, or function of the flagellum. May polymerize to form a filamentous structure that is part of the flagellum. This is an uncharacterized protein from Bacillus subtilis (strain 168).